The sequence spans 621 residues: Glutathione-regulated potassium-efflux system protein KefC (621 aa).

Helical transmembrane passes span 9–29, 30–50, 54–74, 90–110, 114–134, 149–169, 178–198, 232–252, 270–290, 296–316, 326–346, and 359–379; these read ALIYLGAAALIVPIASVLGLG, SVLGYLIAGCIIGPWALRLVN, AILHFAEIGVVLMLVAMGLEL, GALQMVACGVLIGLFCMLLGL, VAELIGMTLALSSTAIAMQAM, FAVLLFQDIAAIPLVAMIPLL, LMAFALSALKVAAALALVVVL, LLLEEVGLSMAMGAFLAGVLL, GLLLGLFFIGVGMSIDFAPWS, IVILLVGFPAIKMLMLWLIAQ, RWFAVLLGQGSEFAFVVFGPA, and ALTLAVALSMATTPILLVLLT. The 120-residue stretch at 399–518 folds into the RCK N-terminal domain; it reads QPRVIVAGFG…AGVEAPERET (120 aa). Residues 598 to 621 are disordered; that stretch reads GWQGTEEGRHTGDIADEPENKPSA.

The protein belongs to the monovalent cation:proton antiporter 2 (CPA2) transporter (TC 2.A.37) family. KefC subfamily. As to quaternary structure, homodimer. Interacts with the regulatory subunit KefF.

It is found in the cell inner membrane. Its function is as follows. Pore-forming subunit of a potassium efflux system that confers protection against electrophiles. Catalyzes K(+)/H(+) antiport. The chain is Glutathione-regulated potassium-efflux system protein KefC from Klebsiella aerogenes (Enterobacter aerogenes).